The following is a 331-amino-acid chain: Ferredoxin--NADP reductase (331 aa).

Positions 14, 33, 41, 46, 86, 120, 284, and 327 each coordinate FAD.

It belongs to the ferredoxin--NADP reductase type 2 family. In terms of assembly, homodimer. FAD serves as cofactor.

The catalysed reaction is 2 reduced [2Fe-2S]-[ferredoxin] + NADP(+) + H(+) = 2 oxidized [2Fe-2S]-[ferredoxin] + NADPH. This chain is Ferredoxin--NADP reductase, found in Picrophilus torridus (strain ATCC 700027 / DSM 9790 / JCM 10055 / NBRC 100828 / KAW 2/3).